The following is a 485-amino-acid chain: Trigger factor (485 aa).

Residues 169 to 261 form the PPIase FKBP-type domain; the sequence is GDVAIVDFVG…LKELKEKELP (93 aa).

Belongs to the FKBP-type PPIase family. Tig subfamily.

The protein resides in the cytoplasm. It carries out the reaction [protein]-peptidylproline (omega=180) = [protein]-peptidylproline (omega=0). In terms of biological role, involved in protein export. Acts as a chaperone by maintaining the newly synthesized protein in an open conformation. Functions as a peptidyl-prolyl cis-trans isomerase. This chain is Trigger factor, found in Trichodesmium erythraeum (strain IMS101).